A 466-amino-acid polypeptide reads, in one-letter code: Exodeoxyribonuclease 7 large subunit (466 aa).

Belongs to the XseA family. Heterooligomer composed of large and small subunits.

It localises to the cytoplasm. It carries out the reaction Exonucleolytic cleavage in either 5'- to 3'- or 3'- to 5'-direction to yield nucleoside 5'-phosphates.. Its function is as follows. Bidirectionally degrades single-stranded DNA into large acid-insoluble oligonucleotides, which are then degraded further into small acid-soluble oligonucleotides. In Vesicomyosocius okutanii subsp. Calyptogena okutanii (strain HA), this protein is Exodeoxyribonuclease 7 large subunit.